Consider the following 292-residue polypeptide: Protein/nucleic acid deglycase HchA (292 aa).

Positions 1 to 12 (MSQDVNELSKQP) are enriched in polar residues. The tract at residues 1-23 (MSQDVNELSKQPTPDKAEDNAFF) is disordered. Cys190 serves as the catalytic Nucleophile.

This sequence belongs to the peptidase C56 family. HchA subfamily.

The protein resides in the cytoplasm. The enzyme catalyses N(omega)-(1-hydroxy-2-oxopropyl)-L-arginyl-[protein] + H2O = lactate + L-arginyl-[protein] + H(+). It carries out the reaction N(6)-(1-hydroxy-2-oxopropyl)-L-lysyl-[protein] + H2O = lactate + L-lysyl-[protein] + H(+). The catalysed reaction is S-(1-hydroxy-2-oxopropyl)-L-cysteinyl-[protein] + H2O = lactate + L-cysteinyl-[protein] + H(+). It catalyses the reaction N(omega)-(1-hydroxy-2-oxoethyl)-L-arginyl-[protein] + H2O = L-arginyl-[protein] + glycolate + H(+). The enzyme catalyses N(6)-(1-hydroxy-2-oxoethyl)-L-lysyl-[protein] + H2O = glycolate + L-lysyl-[protein] + H(+). It carries out the reaction S-(1-hydroxy-2-oxoethyl)-L-cysteinyl-[protein] + H2O = glycolate + L-cysteinyl-[protein] + H(+). The catalysed reaction is N(2)-(1-hydroxy-2-oxopropyl)-dGTP + H2O = lactate + dGTP + H(+). It catalyses the reaction N(2)-(1-hydroxy-2-oxopropyl)-GTP + H2O = lactate + GTP + H(+). The enzyme catalyses N(2)-(1-hydroxy-2-oxopropyl)-GDP + H2O = lactate + GDP + H(+). It carries out the reaction N(2)-(1-hydroxy-2-oxopropyl)-GMP + H2O = lactate + GMP + H(+). The catalysed reaction is N(2)-(1-hydroxy-2-oxoethyl)-dGTP + H2O = dGTP + glycolate + H(+). It catalyses the reaction N(2)-(1-hydroxy-2-oxoethyl)-GTP + H2O = glycolate + GTP + H(+). The enzyme catalyses N(2)-(1-hydroxy-2-oxoethyl)-GDP + H2O = glycolate + GDP + H(+). It carries out the reaction N(2)-(1-hydroxy-2-oxoethyl)-GMP + H2O = glycolate + GMP + H(+). The catalysed reaction is an N(2)-(1-hydroxy-2-oxopropyl)-guanosine in RNA + H2O = a guanosine in RNA + lactate + H(+). It catalyses the reaction an N(2)-(1-hydroxy-2-oxopropyl)-2'-deoxyguanosine in DNA + H2O = a 2'-deoxyguanosine in DNA + lactate + H(+). The enzyme catalyses an N(2)-(1-hydroxy-2-oxoethyl)-guanosine in RNA + H2O = a guanosine in RNA + glycolate + H(+). It carries out the reaction an N(2)-(1-hydroxy-2-oxoethyl)-2'-deoxyguanosine in DNA + H2O = a 2'-deoxyguanosine in DNA + glycolate + H(+). Its function is as follows. Protein and nucleotide deglycase that catalyzes the deglycation of the Maillard adducts formed between amino groups of proteins or nucleotides and reactive carbonyl groups of glyoxals. Thus, functions as a protein deglycase that repairs methylglyoxal- and glyoxal-glycated proteins, and releases repaired proteins and lactate or glycolate, respectively. Deglycates cysteine, arginine and lysine residues in proteins, and thus reactivates these proteins by reversing glycation by glyoxals. Acts on early glycation intermediates (hemithioacetals and aminocarbinols), preventing the formation of Schiff bases and advanced glycation endproducts (AGE). Also functions as a nucleotide deglycase able to repair glycated guanine in the free nucleotide pool (GTP, GDP, GMP, dGTP) and in DNA and RNA. Is thus involved in a major nucleotide repair system named guanine glycation repair (GG repair), dedicated to reversing methylglyoxal and glyoxal damage via nucleotide sanitization and direct nucleic acid repair. Plays an important role in protecting cells from carbonyl stress. The protein is Protein/nucleic acid deglycase HchA of Staphylococcus aureus (strain bovine RF122 / ET3-1).